Reading from the N-terminus, the 260-residue chain is Archaerhodopsin-1 (260 aa).

A propeptide spanning residues 1–6 (MDPIAL) is cleaved from the precursor. Residues 7 to 20 (TAAVGADLLGDGRP) lie on the Extracellular side of the membrane. A helical membrane pass occupies residues 21 to 42 (ETLWLGIGTLLMLIGTFYFIVK). Topologically, residues 43–51 (GWGVTDKEA) are cytoplasmic. The chain crosses the membrane as a helical span at residues 52–73 (REYYSITILVPGIASAAYLSMF). Topologically, residues 74–91 (FGIGLTEVQVGSEMLDIY) are extracellular. A helical transmembrane segment spans residues 92–113 (YARYADWLFTTPLLLLDLALLA). Residues 114-116 (KVD) lie on the Cytoplasmic side of the membrane. The chain crosses the membrane as a helical span at residues 117 to 139 (RVSIGTLVGVDALMIVTGLVGAL). The Extracellular segment spans residues 140-143 (SHTP). A helical transmembrane segment spans residues 144 to 172 (LARYTWWLFSTICMIVVLYFLATSLRAAA). Residues 173 to 176 (KERG) are Cytoplasmic-facing. A helical transmembrane segment spans residues 177 to 204 (PEVASTFNTLTALVLVLWTAYPILWIIG). Residues 205-212 (TEGAGVVG) are Extracellular-facing. A helical transmembrane segment spans residues 213–245 (LGIETLLFMVLDVTAKVGFGFILLRSRAILGDT). The residue at position 228 (lysine 228) is an N6-(retinylidene)lysine. Residues 246-260 (EAPEPSAGAEASAAD) are Cytoplasmic-facing.

This sequence belongs to the archaeal/bacterial/fungal opsin family.

Its subcellular location is the cell membrane. Its function is as follows. Light-driven proton pump. It may interact with bacterioruberin in the claret membrane. This chain is Archaerhodopsin-1, found in Halorubrum ezzemoulense (Halorubrum chaoviator).